We begin with the raw amino-acid sequence, 435 residues long: MRLSRFLLPTLKETPSEAEIVSHRLMLRAGMIRQHASGIYNWLPLGLRVLRKIEQVVREEQDATGAQEILMPTIQSADLWRESGRYDDYGKEMLRIVDRHERDMLYGPTHEEVATDVFRKNVKSYRALPQNLYQIQWKFRDEVRPRFGVMRGREFLMKDNYSFDLTYEGARHSYNKMFVAYLRTFARLGLKAIPMAADTGPIGGKLSHEFIILADTGESAVFCHRDLLDKPAPENVDYDSDLQPLVDSWTSLYAATDEMHRPDHGVPEGDLVSARGIEVGHIFHFGTKYSAPMGATVTAPDGSSQAVFMGSYGIGVSRLVAGIIEASHDDNGIIWPDGVAPFDIGVINLKVGDAATDGVCADLYGRLRAAGKDVLFDDTDDRAGAKFATMDLIGLPWQVIAGPKGVAKGMVELKERATGERHELSIDSALAKLLG.

It belongs to the class-II aminoacyl-tRNA synthetase family. ProS type 2 subfamily. Homodimer.

Its subcellular location is the cytoplasm. It catalyses the reaction tRNA(Pro) + L-proline + ATP = L-prolyl-tRNA(Pro) + AMP + diphosphate. Catalyzes the attachment of proline to tRNA(Pro) in a two-step reaction: proline is first activated by ATP to form Pro-AMP and then transferred to the acceptor end of tRNA(Pro). This chain is Proline--tRNA ligase, found in Rhodospirillum rubrum (strain ATCC 11170 / ATH 1.1.1 / DSM 467 / LMG 4362 / NCIMB 8255 / S1).